The chain runs to 76 residues: Horsegram inhibitor 1 (76 aa).

7 disulfides stabilise this stretch: Cys16/Cys70, Cys17/Cys32, Cys20/Cys66, Cys22/Cys30, Cys40/Cys47, Cys44/Cys59, and Cys49/Cys57.

The protein belongs to the Bowman-Birk serine protease inhibitor family. In terms of assembly, HGI-III exists in a state of equilibrium between monomer, homodimer and trimer, with homodimer being the predominant form. The homodimer is stabilized by the non-covalent interaction between Lys-24 of one subunit and Asp-76 of the other subunit. The homodimer is more thermostable than the monomer. HGGI-I, HGGI-II and HGGI-III exist as monomers. In terms of processing, HGGI-I, HGGI-II and HGGI-III are produced by proteolysis of the N- and C-termini of HGI-III.

Its function is as follows. Inhibitors of trypsin and chymotrypsin. HGGI-III has a higher activity than HGGI-I or HGGI-II. This chain is Horsegram inhibitor 1, found in Vigna unguiculata subsp. cylindrica (Horse gram).